The chain runs to 111 residues: MRQMKRTAYIILLVCVLALWMDSVQAGSSFLSPSQRPQGKDKKPPRVGRRDSDGILDLFMRPPLQDEDIRHITFNTPFEIGITMTEELFQQYGEVMQKIMQDLLMDTPAKE.

An N-terminal signal peptide occupies residues 1–26; the sequence is MRQMKRTAYIILLVCVLALWMDSVQA. Over residues 28-37 the composition is skewed to polar residues; it reads SSFLSPSQRP. Positions 28–53 are disordered; the sequence is SSFLSPSQRPQGKDKKPPRVGRRDSD. S29 is lipidated: O-decanoyl serine; alternate. S29 carries the O-hexanoyl serine; alternate lipid modification. A lipid anchor (O-octanoyl serine; alternate) is attached at S29. Basic and acidic residues predominate over residues 38–53; that stretch reads QGKDKKPPRVGRRDSD. V47 carries the post-translational modification Valine amide. Residues 51-111 constitute a propeptide, removed in mature form; sequence DSDGILDLFM…DLLMDTPAKE (61 aa).

This sequence belongs to the motilin family. O-octanoylated by GOAT/MBOAT4. O-octanoylation or O-decanoylation is essential for activity. The O-decanoylated form ghrelin-21-C10 differs in the length of the carbon backbone of the carboxylic acid forming an ester bond with Ser-29. 44% of eel ghrelin is O-decanoylated. Highest levels in stomach and anterior intestine. Lower levels in posterior intestine, kidney and brain. Low levels in heart, head kidney and middle intestine.

The protein resides in the secreted. In terms of biological role, ligand for growth hormone secretagogue receptor type 1 (GHSR). Induces the release of growth hormone from the pituitary. Has an appetite-stimulating effect, induces adiposity and stimulates gastric acid secretion. Involved in growth regulation. This chain is Ghrelin (ghrl), found in Anguilla japonica (Japanese eel).